Consider the following 277-residue polypeptide: Exosome complex component Rrp42 (277 aa).

The protein belongs to the RNase PH family. Rrp42 subfamily. In terms of assembly, component of the archaeal exosome complex. Forms a hexameric ring-like arrangement composed of 3 Rrp41-Rrp42 heterodimers. The hexameric ring associates with a trimer of Rrp4 and/or Csl4 subunits.

The protein localises to the cytoplasm. Its function is as follows. Non-catalytic component of the exosome, which is a complex involved in RNA degradation. Contributes to the structuring of the Rrp41 active site. The polypeptide is Exosome complex component Rrp42 (Pyrococcus furiosus (strain ATCC 43587 / DSM 3638 / JCM 8422 / Vc1)).